The chain runs to 81 residues: Elongation factor 1-beta (81 aa).

This sequence belongs to the EF-1-beta/EF-1-delta family.

Its function is as follows. Promotes the exchange of GDP for GTP in EF-1-alpha/GDP, thus allowing the regeneration of EF-1-alpha/GTP that could then be used to form the ternary complex EF-1-alpha/GTP/AAtRNA. The chain is Elongation factor 1-beta from Nanoarchaeum equitans (strain Kin4-M).